Consider the following 69-residue polypeptide: Alpha-conotoxin-like Tx1 (69 aa).

The signal sequence occupies residues 1–21; it reads MGMRMMFVVFLLVVLASTVVS. The propeptide occupies 22–49; the sequence is STSGRRAFHGRNAAAKASGLVSLTDRRP. 2 disulfides stabilise this stretch: Cys-51/Cys-57 and Cys-52/Cys-65. The ser-Xaa-Pro motif, crucial for potent interaction with nAChR stretch occupies residues 53-55; sequence SDP. Residue Gly-66 is modified to Glycine amide.

The protein belongs to the conotoxin A superfamily. As to expression, expressed by the venom duct.

The protein localises to the secreted. In terms of biological role, alpha-conotoxins act on postsynaptic membranes, they bind to the nicotinic acetylcholine receptors (nAChR) and thus inhibit them. The sequence is that of Alpha-conotoxin-like Tx1 from Conus textile (Cloth-of-gold cone).